Here is a 148-residue protein sequence, read N- to C-terminus: D-aminoacyl-tRNA deacylase (148 aa).

The Gly-cisPro motif, important for rejection of L-amino acids signature appears at 136–137 (GP).

This sequence belongs to the DTD family. Homodimer.

It localises to the cytoplasm. It carries out the reaction glycyl-tRNA(Ala) + H2O = tRNA(Ala) + glycine + H(+). The enzyme catalyses a D-aminoacyl-tRNA + H2O = a tRNA + a D-alpha-amino acid + H(+). Its function is as follows. An aminoacyl-tRNA editing enzyme that deacylates mischarged D-aminoacyl-tRNAs. Also deacylates mischarged glycyl-tRNA(Ala), protecting cells against glycine mischarging by AlaRS. Acts via tRNA-based rather than protein-based catalysis; rejects L-amino acids rather than detecting D-amino acids in the active site. By recycling D-aminoacyl-tRNA to D-amino acids and free tRNA molecules, this enzyme counteracts the toxicity associated with the formation of D-aminoacyl-tRNA entities in vivo and helps enforce protein L-homochirality. In Kosmotoga olearia (strain ATCC BAA-1733 / DSM 21960 / TBF 19.5.1), this protein is D-aminoacyl-tRNA deacylase.